The chain runs to 410 residues: Elongation factor Tu, chloroplastic (410 aa).

Residues 10 to 215 (KPHVNIGTIG…NVDSYIPTPE (206 aa)) enclose the tr-type G domain. The segment at 19–26 (GHVDHGKT) is G1. A GTP-binding site is contributed by 19 to 26 (GHVDHGKT). A Mg(2+)-binding site is contributed by Thr26. The tract at residues 61-65 (GITIN) is G2. The segment at 82 to 85 (DCPG) is G3. Residues 82-86 (DCPGH) and 137-140 (NKKD) contribute to the GTP site. The tract at residues 137–140 (NKKD) is G4. The interval 175–177 (SAL) is G5.

This sequence belongs to the TRAFAC class translation factor GTPase superfamily. Classic translation factor GTPase family. EF-Tu/EF-1A subfamily.

The protein localises to the plastid. Its subcellular location is the chloroplast. It catalyses the reaction GTP + H2O = GDP + phosphate + H(+). Its function is as follows. GTP hydrolase that promotes the GTP-dependent binding of aminoacyl-tRNA to the A-site of ribosomes during protein biosynthesis. The chain is Elongation factor Tu, chloroplastic (tufA) from Oltmannsiellopsis viridis (Marine flagellate).